Reading from the N-terminus, the 670-residue chain is Beta-fructofuranosidase 1 (670 aa).

The segment at M1–P40 is disordered. At M1 to T44 the chain is on the cytoplasmic side. Residues M1–Q112 constitute a propeptide, removed in mature form. A helical; Signal-anchor for type II membrane protein transmembrane segment spans residues V45 to A65. The Lumenal segment spans residues S66–L670. Substrate-binding positions include W136–D139, Q155, and W163. D139 is a catalytic residue. The N-linked (GlcNAc...) asparagine glycan is linked to N165. Residues W198–S199 and R263–D264 each bind substrate. An N-linked (GlcNAc...) asparagine glycan is attached at N275. Residues E322 and D362 each coordinate substrate. N-linked (GlcNAc...) asparagine glycosylation occurs at N518. C519 and C567 are joined by a disulfide. N-linked (GlcNAc...) asparagine glycans are attached at residues N595 and N639.

The protein belongs to the glycosyl hydrolase 32 family. May be present in two forms, a 70 kDa monomer and a heterodimer of the 30 kDa and 38 kDa subunits. The ratio of the levels of the two forms within cells appears to be regulated developmentally.

The protein localises to the membrane. The protein resides in the vacuole lumen. It carries out the reaction Hydrolysis of terminal non-reducing beta-D-fructofuranoside residues in beta-D-fructofuranosides.. It participates in glycan biosynthesis; sucrose metabolism. This Zea mays (Maize) protein is Beta-fructofuranosidase 1 (IVR1).